The sequence spans 366 residues: Succinyl-diaminopimelate desuccinylase (366 aa).

His-66 serves as a coordination point for Zn(2+). Asp-68 is an active-site residue. Position 97 (Asp-97) interacts with Zn(2+). Glu-127 acts as the Proton acceptor in catalysis. Glu-128, Glu-156, and His-341 together coordinate Zn(2+).

Belongs to the peptidase M20A family. DapE subfamily. Homodimer. It depends on Zn(2+) as a cofactor. The cofactor is Co(2+).

The catalysed reaction is N-succinyl-(2S,6S)-2,6-diaminopimelate + H2O = (2S,6S)-2,6-diaminopimelate + succinate. It participates in amino-acid biosynthesis; L-lysine biosynthesis via DAP pathway; LL-2,6-diaminopimelate from (S)-tetrahydrodipicolinate (succinylase route): step 3/3. Its function is as follows. Catalyzes the hydrolysis of N-succinyl-L,L-diaminopimelic acid (SDAP), forming succinate and LL-2,6-diaminopimelate (DAP), an intermediate involved in the bacterial biosynthesis of lysine and meso-diaminopimelic acid, an essential component of bacterial cell walls. The chain is Succinyl-diaminopimelate desuccinylase from Aliarcobacter butzleri (strain RM4018) (Arcobacter butzleri).